The primary structure comprises 407 residues: Peptidase T (407 aa).

H77 lines the Zn(2+) pocket. D79 is a catalytic residue. D138 serves as a coordination point for Zn(2+). E172 serves as the catalytic Proton acceptor. Zn(2+) is bound by residues E173, D195, and H377.

This sequence belongs to the peptidase M20B family. It depends on Zn(2+) as a cofactor.

The protein localises to the cytoplasm. The enzyme catalyses Release of the N-terminal residue from a tripeptide.. Functionally, cleaves the N-terminal amino acid of tripeptides. The polypeptide is Peptidase T (Aeromonas salmonicida (strain A449)).